The sequence spans 688 residues: Sciellin (688 aa).

Polar residues predominate over residues 1-25 (MSNVTLRKMSPTGNEMKSTTQGTTR). The tract at residues 1 to 29 (MSNVTLRKMSPTGNEMKSTTQGTTRKQQD) is disordered. Lysine 83 carries the N6-acetyllysine modification. Positions 134 to 231 (QPGGSLNANT…TNRSAERNIR (98 aa)) are disordered. Low complexity predominate over residues 140–154 (NANTSNTIASTSATT). Residues 186–195 (VHPPIPPKPS) show a composition bias toward pro residues. Repeat copies occupy residues 251-266 (GEEL…SLNR), 267-286 (NQGL…REKR), 287-306 (AKSL…DGKG), 307-326 (IQSL…NEKG), 327-346 (RQNL…TSRR), 347-366 (SEDL…NTTG), 367-386 (KKDL…NITR), 387-406 (GQSL…SNQG), 407-426 (SKDL…STEG), 427-446 (GQSL…TNQG), 447-465 (NQDL…KSSE), 466-484 (QGLD…NTDG), 485-504 (KQDL…NNQR), 505-523 (NQDL…RNNQ), 524-543 (SQDL…NTNR), and 544-563 (DQNL…NKNG). Residues 251 to 563 (GEELDNLIKM…NSHVSENKNG (313 aa)) form a 16 X approximate tandem repeats region. At serine 289 the chain carries Phosphoserine. The disordered stretch occupies residues 340 to 373 (MNKTSRRSEDLDNATEVNPKGHENTTGKKDLDGL). The segment covering 358-373 (PKGHENTTGKKDLDGL) has biased composition (basic and acidic residues). Residue serine 389 is modified to Phosphoserine. The 67-residue stretch at 619-685 (DMCTYCRKPL…EPCYSKIMAK (67 aa)) folds into the LIM zinc-binding domain.

As to expression, highly expressed in esophagus. It is also expressed in keratinocytes, amniotic tissue, foreskin stratum spinosum and stratum granulosum, hair follicle and nail.

Its subcellular location is the cytoplasm. The protein localises to the membrane. Its function is as follows. May function in the assembly or regulation of proteins in the cornified envelope. The LIM domain may be involved in homotypic or heterotypic associations and may function to localize sciellin to the cornified envelope. The protein is Sciellin (SCEL) of Homo sapiens (Human).